Here is a 189-residue protein sequence, read N- to C-terminus: Potassium-transporting ATPase KdpC subunit (189 aa).

The chain crosses the membrane as a helical span at residues 10 to 30 (ITLVFCVFFSVFYILILWLFA).

It belongs to the KdpC family. The system is composed of three essential subunits: KdpA, KdpB and KdpC.

The protein resides in the cell inner membrane. In terms of biological role, part of the high-affinity ATP-driven potassium transport (or Kdp) system, which catalyzes the hydrolysis of ATP coupled with the electrogenic transport of potassium into the cytoplasm. This subunit acts as a catalytic chaperone that increases the ATP-binding affinity of the ATP-hydrolyzing subunit KdpB by the formation of a transient KdpB/KdpC/ATP ternary complex. This Bacteroides thetaiotaomicron (strain ATCC 29148 / DSM 2079 / JCM 5827 / CCUG 10774 / NCTC 10582 / VPI-5482 / E50) protein is Potassium-transporting ATPase KdpC subunit.